We begin with the raw amino-acid sequence, 85 residues long: Large ribosomal subunit protein bL27 (85 aa).

The tract at residues 1–24 (MAHKKAGGSSRNGRDSNSKRLGVK) is disordered.

Belongs to the bacterial ribosomal protein bL27 family.

The polypeptide is Large ribosomal subunit protein bL27 (Nitrosospira multiformis (strain ATCC 25196 / NCIMB 11849 / C 71)).